A 125-amino-acid chain; its full sequence is Insulin growth factor-like family member 3 (125 aa).

An N-terminal signal peptide occupies residues M1–G24.

The protein belongs to the IGFL family. As to expression, detected in the cerebellum.

Its subcellular location is the secreted. Its function is as follows. Potential ligand of the IGFLR1 cell membrane receptor. In Homo sapiens (Human), this protein is Insulin growth factor-like family member 3 (IGFL3).